Reading from the N-terminus, the 242-residue chain is C-reactive protein 1.4 (242 aa).

An N-terminal signal peptide occupies residues 1–24; it reads MKTFHGPTFGTAVFLYLLLFLTSA. The Pentraxin (PTX) domain occupies 30–241; the sequence is ITSKVKFPPS…GVVLSPNEIC (212 aa). 2 residues coordinate phosphocholine: T60 and Y63. Disulfide bonds link C62/C125 and C112/C144. Residues D85 and N86 each coordinate Ca(2+). Residue N147 is glycosylated (N-linked (GlcNAc...) asparagine). Residues E168, Q169, D170, and Q180 each contribute to the Ca(2+) site. A disulfide bond links C207 and C241.

It belongs to the pentraxin family. As to quaternary structure, homopentamer. Pentraxin (or pentaxin) have a discoid arrangement of 5 non-covalently bound subunits. Ca(2+) serves as cofactor.

The protein resides in the secreted. Might serve the role of immunoglobulins. The sequence is that of C-reactive protein 1.4 from Limulus polyphemus (Atlantic horseshoe crab).